Here is a 204-residue protein sequence, read N- to C-terminus: uncharacterized protein (204 aa).

This is an uncharacterized protein from Rickettsia prowazekii (strain Madrid E).